Reading from the N-terminus, the 322-residue chain is MKKIAVLTSGGDSPGMNAAVRAVVRTAIYNEIEVYGVYHGYQGLLNDDIHKLELGSVGDTIQRGGTFLYSARCPEFKEQEVRKVAIENLRKRGIEGLVVIGGDGSYRGAQRISEECKEIQTIGIPGTIDNDINGTDFTIGFDTALNTIIGLVDKIRDTASSHARTFIIEAMGRDCGDLALWAGLSVGAETIVVPEVKTDIKEIADKIEQGIKRGKKHSIVLVAEGCMTAQDCQKELSQFINVDNRVSVLGHVQRGGSPTGADRVLASRLGGYAVDLLMQGETAKGVGIKNNKIVATSFDEIFDGKDHKFDYSLYELANKLSI.

Residue G11 coordinates ATP. ADP is bound at residue 21 to 25 (RAVVR). Residues 72–73 (RC) and 102–105 (GDGS) each bind ATP. D103 contributes to the Mg(2+) binding site. 127–129 (TID) is a substrate binding site. Residue D129 is the Proton acceptor of the active site. R156 serves as a coordination point for ADP. Substrate is bound by residues R164 and 171-173 (MGR). Residues 187–189 (GAE), R213, and 215–217 (KKH) contribute to the ADP site. Substrate-binding positions include E224, R245, and 251–254 (HVQR).

Belongs to the phosphofructokinase type A (PFKA) family. ATP-dependent PFK group I subfamily. Prokaryotic clade 'B1' sub-subfamily. As to quaternary structure, homotetramer. Mg(2+) serves as cofactor.

It localises to the cytoplasm. The enzyme catalyses beta-D-fructose 6-phosphate + ATP = beta-D-fructose 1,6-bisphosphate + ADP + H(+). It functions in the pathway carbohydrate degradation; glycolysis; D-glyceraldehyde 3-phosphate and glycerone phosphate from D-glucose: step 3/4. With respect to regulation, allosterically activated by ADP and other diphosphonucleosides, and allosterically inhibited by phosphoenolpyruvate. Functionally, catalyzes the phosphorylation of D-fructose 6-phosphate to fructose 1,6-bisphosphate by ATP, the first committing step of glycolysis. This Staphylococcus aureus (strain MRSA252) protein is ATP-dependent 6-phosphofructokinase.